The chain runs to 500 residues: L-arabinose isomerase (500 aa).

Glu306, Glu331, His348, and His447 together coordinate Mn(2+).

This sequence belongs to the arabinose isomerase family. Mn(2+) serves as cofactor.

The enzyme catalyses beta-L-arabinopyranose = L-ribulose. It participates in carbohydrate degradation; L-arabinose degradation via L-ribulose; D-xylulose 5-phosphate from L-arabinose (bacterial route): step 1/3. In terms of biological role, catalyzes the conversion of L-arabinose to L-ribulose. This chain is L-arabinose isomerase, found in Anoxybacillus flavithermus (strain DSM 21510 / WK1).